Here is a 434-residue protein sequence, read N- to C-terminus: Putative DD-carboxypeptidase TP_0574 (434 aa).

The N-terminal stretch at 1–19 (MKVKYALLSAGALQLLVVG) is a signal peptide. Cys-20 carries N-palmitoyl cysteine lipidation. Cys-20 carries the S-diacylglycerol cysteine lipid modification.

As to quaternary structure, probably a monomer; a non-lipidated construct (residues 22-434) is monomeric in solution but crystallizes as a homodimer. Zn(2+) is required as a cofactor. In terms of processing, the N-terminus is blocked. Present as a doublet of low abundance 48 kDa and high abundance 47 kDa proteins. The longer form is probably due to readthrough of the stop codon; the extra amino acids at the C-terminus would be X-Lys-Arg-Gly-Val-Leu-Ser-Arg-Val-Ser, a peptide antibody against this sequence detects only the 48 kDa form.

It is found in the cell inner membrane. Functionally, a possible D,D-carboxypeptidase, that releases amino acids sequentially from a proteins C-terminus. Has zinc-dependent carboxypeptidase activity on synthetic depsipeptide substrates. May serve to decrease cross-linking of peptidoglycan, promoting the highly sinusous motility of this spirochaete. Overexpression of the whole protein in E.coli leads to aberrant cell morphology and extrusion of the cytoplasm, while overexpression of a construct with the first 62 resides of the protein fused to PhoA does have this effect, suggesting the whole protein, not the lipoprotein moiety, is toxic. Binds penicillin. Penicillin binding is covalent, does not require lipidation, and is zinc-dependent. While this protein has beta-lactamase activity in vitro, that is probably not its role in vivo, as T.pallidum is very sensitive to penicillin antibiotics. A pathogen-specific membrane antigen. Most abundant of the membrane lipoproteins, only found in pathogenic treponemes, suggesting that it is an important structural moiety in the cell envelope of virulent treponemal subspecies. A lipopeptide corresponding to the first 6 mature residues induces host (human and mouse) cytokine release by monocyte cell lines via TLR2 and CD14; nonlipidated protein does not stimulate host cells. Stimulates host (human) dendritic cell maturation to become MHC class II-positive antigen presenting cells via TLR2, which depends on lipidation; nonlipidated protein does not stimulate maturation. In Treponema pallidum (strain Nichols), this protein is Putative DD-carboxypeptidase TP_0574.